Consider the following 100-residue polypeptide: Urease subunit gamma (100 aa).

This sequence belongs to the urease gamma subunit family. In terms of assembly, heterotrimer of UreA (gamma), UreB (beta) and UreC (alpha) subunits. Three heterotrimers associate to form the active enzyme.

The protein localises to the cytoplasm. It catalyses the reaction urea + 2 H2O + H(+) = hydrogencarbonate + 2 NH4(+). It functions in the pathway nitrogen metabolism; urea degradation; CO(2) and NH(3) from urea (urease route): step 1/1. This Prochlorococcus marinus (strain NATL1A) protein is Urease subunit gamma.